The chain runs to 141 residues: Large ribosomal subunit protein uL11 (141 aa).

This sequence belongs to the universal ribosomal protein uL11 family. In terms of assembly, part of the ribosomal stalk of the 50S ribosomal subunit. Interacts with L10 and the large rRNA to form the base of the stalk. L10 forms an elongated spine to which L12 dimers bind in a sequential fashion forming a multimeric L10(L12)X complex. Post-translationally, one or more lysine residues are methylated.

Functionally, forms part of the ribosomal stalk which helps the ribosome interact with GTP-bound translation factors. The protein is Large ribosomal subunit protein uL11 of Crocosphaera subtropica (strain ATCC 51142 / BH68) (Cyanothece sp. (strain ATCC 51142)).